The following is a 243-amino-acid chain: Cell surface glycoprotein CD200 receptor 1-B (243 aa).

Over 1–29 (MEISQQAGWCKKPASPMNTRAALEAVRNT) the chain is Cytoplasmic. The helical; Signal-anchor for type II membrane protein transmembrane segment at 30–47 (AWTIVLLTSAAVMGASGI) threads the bilayer. An Ig-like V-type domain is found at 47 to 146 (ISRVSANLGH…GNFHYLYHLT (100 aa)). At 48–243 (SRVSANLGHS…LAQLPGGSAP (196 aa)) the chain is on the lumenal side. 2 disulfides stabilise this stretch: C62/C130 and C165/C214. 6 N-linked (GlcNAc...) asparagine glycosylation sites follow: N64, N67, N127, N193, N222, and N228. An Ig-like C2-type domain is found at 144–228 (HLTVLVAPRM…ATLNETRSIN (85 aa)).

The protein belongs to the CD200R family. Expressed in peripheral blood lymphocytes (PBL) and peripheral blood mononuclear cells (PBMC).

It is found in the membrane. The protein is Cell surface glycoprotein CD200 receptor 1-B (CD200R1B) of Gallus gallus (Chicken).